The chain runs to 430 residues: Phosphoribosylamine--glycine ligase (430 aa).

Residues K109 to N316 form the ATP-grasp domain. V135–S196 lines the ATP pocket. Mg(2+)-binding residues include E286 and N288.

The protein belongs to the GARS family. The cofactor is Mg(2+). It depends on Mn(2+) as a cofactor.

The enzyme catalyses 5-phospho-beta-D-ribosylamine + glycine + ATP = N(1)-(5-phospho-beta-D-ribosyl)glycinamide + ADP + phosphate + H(+). It functions in the pathway purine metabolism; IMP biosynthesis via de novo pathway; N(1)-(5-phospho-D-ribosyl)glycinamide from 5-phospho-alpha-D-ribose 1-diphosphate: step 2/2. This Xylella fastidiosa (strain Temecula1 / ATCC 700964) protein is Phosphoribosylamine--glycine ligase.